The chain runs to 385 residues: UPF0744 protein YSD83 (385 aa).

It belongs to the UPF0744 family.

The sequence is that of UPF0744 protein YSD83 (YSD83) from Saccharomyces paradoxus (Yeast).